Consider the following 147-residue polypeptide: MVHFTVEEKAVITSLWGKVNVEEAGGEALGRLLVVYPWTQRFFDNFGNLSSASAIMGNPKVKAHGKKVLTSLGEAIKNMDDLKGTFAHLSELHCDRLHVDPENFKLLGNELVIVLAKHFGKEFTPQVQAAWQKMVAGVAIALAHKYH.

The Globin domain maps to 3–147 (HFTVEEKAVI…VAIALAHKYH (145 aa)). Residues histidine 64 and histidine 93 each contribute to the heme b site.

The protein belongs to the globin family. In terms of assembly, heterotetramer of two alpha chains and two gamma chains in fetal hemoglobin (Hb F). As to expression, red blood cells.

In terms of biological role, gamma chains make up the fetal hemoglobin F, in combination with alpha chains. The polypeptide is Hemoglobin subunit gamma (HBG) (Cheirogaleus medius (Fat-tailed dwarf lemur)).